A 475-amino-acid chain; its full sequence is UDP-N-acetylmuramate--L-alanine ligase (475 aa).

121–127 is an ATP binding site; that stretch reads GTHGKTT.

The protein belongs to the MurCDEF family.

It is found in the cytoplasm. It catalyses the reaction UDP-N-acetyl-alpha-D-muramate + L-alanine + ATP = UDP-N-acetyl-alpha-D-muramoyl-L-alanine + ADP + phosphate + H(+). It participates in cell wall biogenesis; peptidoglycan biosynthesis. Cell wall formation. This is UDP-N-acetylmuramate--L-alanine ligase from Salinibacter ruber (strain DSM 13855 / M31).